Here is a 206-residue protein sequence, read N- to C-terminus: N-(5'-phosphoribosyl)anthranilate isomerase (206 aa).

It belongs to the TrpF family.

It carries out the reaction N-(5-phospho-beta-D-ribosyl)anthranilate = 1-(2-carboxyphenylamino)-1-deoxy-D-ribulose 5-phosphate. It functions in the pathway amino-acid biosynthesis; L-tryptophan biosynthesis; L-tryptophan from chorismate: step 3/5. In Pseudomonas putida (strain W619), this protein is N-(5'-phosphoribosyl)anthranilate isomerase.